The sequence spans 154 residues: MDKANTNRSKVCGGSGEAKLTGKKRKNVSAKQSKKDAKKENSQMLKWSSKDEVLVLQGMLDFKSVTGKNPVDDINGAYEFVVHEYISTVIDEDFIEKMKSLKKKLKKKQRIYDKDPSSSEPLYQKSSEWLKMIWGYDVESALEKPRKSKRIIKL.

The interval 1–44 is disordered; that stretch reads MDKANTNRSKVCGGSGEAKLTGKKRKNVSAKQSKKDAKKENSQM.

It belongs to the GeBP family.

The sequence is that of Probable transcription factor At4g00232 from Arabidopsis thaliana (Mouse-ear cress).